Consider the following 642-residue polypeptide: Threonine--tRNA ligase (642 aa).

A TGS domain is found at 1–61 (MPVITLPDGS…ENDAQLSIIT (61 aa)). A catalytic region spans residues 243–534 (DHRKIGKQLD…LTEEFAGFFP (292 aa)). Position 286 is an N6-acetyllysine (K286). Zn(2+) contacts are provided by C334, H385, and H511.

The protein belongs to the class-II aminoacyl-tRNA synthetase family. In terms of assembly, homodimer. Zn(2+) serves as cofactor.

The protein localises to the cytoplasm. The enzyme catalyses tRNA(Thr) + L-threonine + ATP = L-threonyl-tRNA(Thr) + AMP + diphosphate + H(+). Functionally, catalyzes the attachment of threonine to tRNA(Thr) in a two-step reaction: L-threonine is first activated by ATP to form Thr-AMP and then transferred to the acceptor end of tRNA(Thr). Also edits incorrectly charged L-seryl-tRNA(Thr). The polypeptide is Threonine--tRNA ligase (Shigella flexneri serotype 5b (strain 8401)).